A 329-amino-acid polypeptide reads, in one-letter code: MLSLESEVLTRHLPLFANKSILLFGDVRDRFADQIKANAKSVAVFSSYFDYARQYADVSFGLYCEIKAELAVFYWTKNKQECQYQLLQWLSQVDVGQEMLIIGENRAGVRSVEKLLEPYGNIAKIDSARRCGLYHFELQSVPDFDGKKFWKSYRLQDLNIFALPAVFSSAELDDGTQLLLSTFNKADRLKGKVLDLGCGAGVIGASLKQQFEKIKLTMSDIHAMALESSRRTLAENALDGTVVASDVFSNIEERFDLIVSNPPFHDGIDTAYRAVEDLIAQAKQRLNRGGELRIVANAFLPYPDLLDKAFGSHQVIAKSNKFKVYSAKA.

This sequence belongs to the methyltransferase superfamily. RsmC family. Monomer.

The protein resides in the cytoplasm. It catalyses the reaction guanosine(1207) in 16S rRNA + S-adenosyl-L-methionine = N(2)-methylguanosine(1207) in 16S rRNA + S-adenosyl-L-homocysteine + H(+). Its function is as follows. Specifically methylates the guanine in position 1207 of 16S rRNA in the 30S particle. This chain is Ribosomal RNA small subunit methyltransferase C, found in Actinobacillus pleuropneumoniae serotype 7 (strain AP76).